Here is a 384-residue protein sequence, read N- to C-terminus: GTPase Obg (384 aa).

Positions methionine 1 to leucine 159 constitute an Obg domain. Residues alanine 20–tryptophan 46 are disordered. Residues glycine 33–glycine 43 show a composition bias toward gly residues. One can recognise an OBG-type G domain in the interval alanine 160 to threonine 348. GTP contacts are provided by residues glycine 166–serine 173, phenylalanine 191–histidine 195, aspartate 213–glycine 216, asparagine 284–aspartate 287, and serine 329–leucine 331. Mg(2+) contacts are provided by serine 173 and threonine 193.

The protein belongs to the TRAFAC class OBG-HflX-like GTPase superfamily. OBG GTPase family. In terms of assembly, monomer. Mg(2+) is required as a cofactor.

Its subcellular location is the cytoplasm. Functionally, an essential GTPase which binds GTP, GDP and possibly (p)ppGpp with moderate affinity, with high nucleotide exchange rates and a fairly low GTP hydrolysis rate. Plays a role in control of the cell cycle, stress response, ribosome biogenesis and in those bacteria that undergo differentiation, in morphogenesis control. The chain is GTPase Obg from Neisseria meningitidis serogroup B (strain ATCC BAA-335 / MC58).